We begin with the raw amino-acid sequence, 704 residues long: Metabotropic glutamate receptor-like protein K (704 aa).

The signal sequence occupies residues 1–21 (MIKLILSIILIICFIINSIES). Residues 22–383 (FKMITLTTGP…SKVEFQRSIQ (362 aa)) lie on the Extracellular side of the membrane. 8 N-linked (GlcNAc...) asparagine glycosylation sites follow: asparagine 66, asparagine 104, asparagine 256, asparagine 286, asparagine 308, asparagine 337, asparagine 343, and asparagine 368. A helical transmembrane segment spans residues 384–404 (IGFSIVSGLLIGFVILMMIGI). The Cytoplasmic portion of the chain corresponds to 405-419 (VKYQDTPSIRSASPS). A helical transmembrane segment spans residues 420-440 (FLNLTLLGGVIIFIGIIVWVA). Topologically, residues 441–455 (PISTHQCNARFWLVT) are extracellular. A helical transmembrane segment spans residues 456–476 (IGFSTLIGSLVVKNIRIWLIF). At 477–492 (DNPELKIRTITNNQLY) the chain is on the cytoplasmic side. A helical transmembrane segment spans residues 493–513 (PWVGLCLVINIVLMSIITTVG). Over 514 to 541 (DLKAIEAQGIDSLGKFEYMTICKMNYTG) the chain is Extracellular. Residue asparagine 538 is glycosylated (N-linked (GlcNAc...) asparagine). A helical membrane pass occupies residues 542-562 (AATLYSILAYFGTLLLVGVFV). Residues 563–578 (SWKIRIVHIEEFSECT) are Cytoplasmic-facing. The chain crosses the membrane as a helical span at residues 579-599 (AIAKTLYSISFCLFVIVPLMI). Over 600-608 (SPQDKQSET) the chain is Extracellular. Residues 609–629 (IILCVTGIFITTGALLIFFLP) traverse the membrane as a helical segment. Residues 630-704 (KFWRIFGNEK…NESSLSNETK (75 aa)) lie on the Cytoplasmic side of the membrane. Disordered regions lie at residues 657 to 677 (ARAE…SKSS) and 685 to 704 (SGIE…NETK).

The protein in the N-terminal section; belongs to the BMP lipoprotein family. It in the C-terminal section; belongs to the G-protein coupled receptor 3 family. GABA-B receptor subfamily.

Its subcellular location is the membrane. The chain is Metabotropic glutamate receptor-like protein K (grlK) from Dictyostelium discoideum (Social amoeba).